A 288-amino-acid polypeptide reads, in one-letter code: Energy-coupling factor transporter ATP-binding protein EcfA2 (288 aa).

The 243-residue stretch at 3-245 folds into the ABC transporter domain; the sequence is IKIENLTHVY…VDTLESVGLA (243 aa). ATP is bound at residue 40 to 47; sequence GHTGSGKS.

This sequence belongs to the ABC transporter superfamily. Energy-coupling factor EcfA family. Forms a stable energy-coupling factor (ECF) transporter complex composed of 2 membrane-embedded substrate-binding proteins (S component), 2 ATP-binding proteins (A component) and 2 transmembrane proteins (T component).

Its subcellular location is the cell membrane. ATP-binding (A) component of a common energy-coupling factor (ECF) ABC-transporter complex. Unlike classic ABC transporters this ECF transporter provides the energy necessary to transport a number of different substrates. This is Energy-coupling factor transporter ATP-binding protein EcfA2 from Clostridium tetani (strain Massachusetts / E88).